A 352-amino-acid polypeptide reads, in one-letter code: UPF0252 protein MJ1282 (352 aa).

The protein belongs to the UPF0252 family.

This chain is UPF0252 protein MJ1282, found in Methanocaldococcus jannaschii (strain ATCC 43067 / DSM 2661 / JAL-1 / JCM 10045 / NBRC 100440) (Methanococcus jannaschii).